A 670-amino-acid polypeptide reads, in one-letter code: MRLQCVVLFAALTLVAATHAPPNVKTVLSAEQHDIPVKRLLRPGNPAGKEDEERGINFSSVPGFEKLANLLKPKPGLKKLLKWADAKKPPETVFTRLRLDKTGTQLFDNTDFPVWAAYTRSVAQTDSEASAVMLKTLVSRYSDEVLSGMIAAAKKSSKTESIATKLETEQMRTWLAAKKTPDDMFLVFKLNKAGDDILSSPLLSAWTNYMKLSNKENPKAQTTLIATMTKHYGDSGVSQILAAARKSPATQSTAKRLEAEQVQLWLKKGRTPDDTFTLLSLDRAGDDLLASPQFNTWMKYINYYNKENPDEKTTVLAKLMTHFDDEELTPILVVARKVPSTESTAAKLQAEQFKNWLSADKSPEEAFTLLQLDKAGDDLLTNPQLTNWLKYTENFNLNKEINEQVTAIQVFRAQYVDDSRIANMVIAAEKVPNTQAIAKRVEDELFKGWTVVLNKPDDVFINLKLETVGENVFESPLWSFYTKFLEKYNTANPGKEQTMISGLARGYNDVTLTNMLLKAKEAPSTKTLATKLEDELVQYWLADKKLPDKLFGYLELKESVDGILTNPVFNVWLKYLNAFNDKAPVKKALMIDTLKSAFGDVAVSNMLFAAKKDPGTAKVAATLQTALLSKWVLEKKTPGQVSAILKEGAGADVSAKLLATYSAKFKVRWG.

The first 17 residues, 1–17, serve as a signal peptide directing secretion; it reads MRLQCVVLFAALTLVAA. The short motif at 39 to 54 is the RxLR-dEER element; that stretch reads RLLRPGNPAGKEDEER. N-linked (GlcNAc...) asparagine glycosylation occurs at Asn-57. Residues 79-126 form a WY1 repeat; it reads KLLKWADAKKPPETVFTRLRLDKTGTQLFDNTDFPVWAAYTRSVAQTD. A 7 X 93 AA tandem repeats region spans residues 79–670; that stretch reads KLLKWADAKK…YSAKFKVRWG (592 aa). Residues 127–217 form an LWY2 repeat; that stretch reads SEASAVMLKT…NYMKLSNKEN (91 aa). One copy of the LWY3 repeat lies at 218–308; sequence PKAQTTLIAT…KYINYYNKEN (91 aa). The LWY4 repeat unit spans residues 309-399; the sequence is PDEKTTVLAK…KYTENFNLNK (91 aa). One copy of the LWY5 repeat lies at 400 to 492; it reads EINEQVTAIQ…KFLEKYNTAN (93 aa). Residues 493 to 583 form an LWY6 repeat; that stretch reads PGKEQTMISG…KYLNAFNDKA (91 aa). Residues 584–670 form an LWY7 repeat; sequence PVKKALMIDT…YSAKFKVRWG (87 aa).

Belongs to the RxLR effector family. Interacts with host dsRNA-binding protein DRB4.

The protein resides in the secreted. Its subcellular location is the host cell. Its function is as follows. Secreted effector that possesses RNA silencing suppression activity by inhibiting the biogenesis of small RNAs in the host plant to promote enhanced susceptibility of host to the pathogen during infection. Interferes with secondary siRNA production by associating with host dsRNA-binding protein DRB4. Inhibits the host salicylic acid pathway during infection. This is RxLR effector protein PSR2 from Phytophthora sojae (Soybean stem and root rot agent).